We begin with the raw amino-acid sequence, 417 residues long: Calreticulin (417 aa).

An N-terminal signal peptide occupies residues 1-17 (MLLSVPLLLGLLGLAVA). An N-domain region spans residues 18–197 (EPAVYFKEQF…NSQVESGSLE (180 aa)). Q26 provides a ligand contact to Ca(2+). At K48 the chain carries N6-acetyllysine. Positions 62 and 64 each coordinate Ca(2+). K64 carries the post-translational modification N6-(2-hydroxyisobutyryl)lysine. Residues C105 and C137 are joined by a disulfide bond. Y109, K111, Y128, and D135 together coordinate an alpha-D-glucoside. At K159 the chain carries N6-acetyllysine. Residues 191–202 (VESGSLEDDWDF) form a 1-1 repeat. A 4 X approximate repeats region spans residues 191–255 (VESGSLEDDW…DAKKPEDWDE (65 aa)). Residues 193–278 (SGSLEDDWDF…PEYKGEWKPR (86 aa)) form a disordered region. The segment at 198–308 (DDWDFLPPKK…YSPDPSIYAY (111 aa)) is P-domain. Residues 207–251 (KIKDPDASKPEDWDERAKIDDPTDSKPEDWDKPEHIPDPDAKKPE) show a composition bias toward basic and acidic residues. Residue K209 is modified to N6-acetyllysine. Repeat copies occupy residues 210–221 (DPDASKPEDWDE), 227–238 (DPTDSKPEDWDK), 244–255 (DPDAKKPEDWDE), 259–269 (GEWEPPVIQNP), 273–283 (GEWKPRQIDNP), and 287–297 (GTWIHPEIDNP). The tract at residues 237–270 (DKPEHIPDPDAKKPEDWDEEMDGEWEPPVIQNPE) is interaction with PPIB. Over residues 252 to 261 (DWDEEMDGEW) the composition is skewed to acidic residues. The segment at 259-297 (GEWEPPVIQNPEYKGEWKPRQIDNPDYKGTWIHPEIDNP) is 3 X approximate repeats. A C-domain region spans residues 309–417 (DNFGVLGLDL…DVPGQAKDEL (109 aa)). D317 serves as a coordination point for an alpha-D-glucoside. D328 is a Ca(2+) binding site. N-linked (GlcNAc...) asparagine glycosylation occurs at N344. A disordered region spans residues 350–417 (TKAAEKQMKD…DVPGQAKDEL (68 aa)). The span at 352–379 (AAEKQMKDKQDEEQRLKEEEEDKKRKEE) shows a compositional bias: basic and acidic residues. Residues 380–409 (EEAEDKEDDEDKDEDEEDEEDKEEDEEEDV) are compositionally biased toward acidic residues. Positions 414–417 (KDEL) match the Prevents secretion from ER motif.

The protein belongs to the calreticulin family. Monomer. Component of an EIF2 complex at least composed of CELF1/CUGBP1, CALR, CALR3, EIF2S1, EIF2S2, HSP90B1 and HSPA5. Interacts with PDIA3/ERp57 and SPACA9. Interacts with TRIM21. Interacts with NR3C1. Interacts with PPIB. Interacts (via P-domain) with PDIA5. Interacts with GABARAP. Interacts with HLA-E-B2M and HLA-G-B2M complexes. Interacts with HLA-F. Interacts with CLCC1.

The protein resides in the endoplasmic reticulum lumen. Its subcellular location is the cytoplasm. It is found in the cytosol. It localises to the secreted. The protein localises to the extracellular space. The protein resides in the extracellular matrix. Its subcellular location is the cell surface. It is found in the sarcoplasmic reticulum lumen. It localises to the cytoplasmic vesicle. The protein localises to the secretory vesicle. The protein resides in the cortical granule. Its subcellular location is the cytolytic granule. Functionally, calcium-binding chaperone that promotes folding, oligomeric assembly and quality control in the endoplasmic reticulum (ER) via the calreticulin/calnexin cycle. This lectin interacts transiently with almost all of the monoglucosylated glycoproteins that are synthesized in the ER. Interacts with the DNA-binding domain of NR3C1 and mediates its nuclear export. Involved in maternal gene expression regulation. May participate in oocyte maturation via the regulation of calcium homeostasis. Present in the cortical granules of non-activated oocytes, is exocytosed during the cortical reaction in response to oocyte activation and might participate in the block to polyspermy. This chain is Calreticulin, found in Homo sapiens (Human).